The primary structure comprises 738 residues: MLRAASNFRAVANREFACAKRQLSKTTRKNATAAATRPGVPRDEREGKEIYTTVGIDHNEPKFDKILIANRGEIACRVIKTAKAMGIKTVAVHSDVDSNSLHVKMADEAICVGEAPTAKSYLRVDRILQAVEDTGAQAVHPGYGFLSENTKFAAELEKAGAKFIGPNSKAILDMGDKIHSKKIATAARVSMIPGYDGEIPEEDFCVKVSREIGYPVMIKASAGGGGKGMRVAWNDKQAREGYRLSKQEAASSFGDDRMLVEKFIDNPRHIEMQILCDKHGNALWLNERECSIQRRNQKVIEEAPSSFVPPEMRRKMGEQAVQLAKAVGYDSAGTVEFLVDSQRNFYFLEMNTRLQVEHPITECITGIDIVQQMLRVAYGHSLPLTQEQVPLNGWAFESRVYAEDPYKGFGLPSVGRLSKYVEPRHVDGVRCDSGIREGSEISIYYDPLICKLVTHGDNRQQALDRMQEALDNYVIRGVTHNIPLLRDIVQEKRFRSGDITTKYLPEVYPEGFQGTVLTHAEEKTVIAFAAALNARKLARANQFLNQNRQRSTHVASFSKTYKFVSSLPAKEGQRPTEHAVEVSFVDGDANKAKVSIGGKVIDISGNLSLSLPVNSIEVNGEHITTQIVGKRAGEITVLYKGTPFKVQVLPEQAVKYLQYMKEKAKVDLSTVVLSPMPGAIKNVNVKPGDMVSEGQELVVMEAMKMQNSLHAGKTGRVKAVNVKVGATVDEGEVLVELE.

One can recognise a Biotin carboxylation domain in the interval 62–509 (KFDKILIANR…TTKYLPEVYP (448 aa)). ATP is bound by residues K177, 209–270 (SREI…PRHI), E261, and N296. In terms of domain architecture, ATP-grasp spans 181-378 (KKIATAARVS…IVQQMLRVAY (198 aa)). 3 residues coordinate Mg(2+): E336, E349, and N351. Residues E336, E349, and N351 each coordinate Mn(2+). Residue R353 is part of the active site. A biotin-binding site is contributed by F409. The Biotinyl-binding domain maps to 663–738 (KAKVDLSTVV…DEGEVLVELE (76 aa)). N6-biotinyllysine is present on K704.

The holoenzyme is a dodecamer composed of 6 alpha subunits and 6 beta subunits. Interacts with sir-2.2. Biotin is required as a cofactor. The cofactor is Mg(2+). Requires Mn(2+) as cofactor. Post-translationally, the biotin cofactor is covalently attached to the C-terminal biotinyl-binding domain and is required for the catalytic activity.

Its subcellular location is the mitochondrion matrix. It carries out the reaction propanoyl-CoA + hydrogencarbonate + ATP = (S)-methylmalonyl-CoA + ADP + phosphate + H(+). The catalysed reaction is butanoyl-CoA + hydrogencarbonate + ATP = (2S)-ethylmalonyl-CoA + ADP + phosphate + H(+). Its pathway is metabolic intermediate metabolism; propanoyl-CoA degradation; succinyl-CoA from propanoyl-CoA: step 1/3. This is one of the 2 subunits of the biotin-dependent propionyl-CoA carboxylase (PCC), a mitochondrial enzyme involved in the catabolism of odd chain fatty acids, branched-chain amino acids isoleucine, threonine, methionine, and valine and other metabolites. Propionyl-CoA carboxylase catalyzes the carboxylation of propionyl-CoA/propanoyl-CoA to D-methylmalonyl-CoA/(S)-methylmalonyl-CoA. Within the holoenzyme, the alpha subunit catalyzes the ATP-dependent carboxylation of the biotin carried by the biotin carboxyl carrier (BCC) domain, while the beta subunit then transfers the carboxyl group from carboxylated biotin to propionyl-CoA. Propionyl-CoA carboxylase also significantly acts on butyryl-CoA/butanoyl-CoA, which is converted to ethylmalonyl-CoA/(2S)-ethylmalonyl-CoA. Other alternative minor substrates include (2E)-butenoyl-CoA/crotonoyl-CoA. This is Propionyl-CoA carboxylase alpha chain, mitochondrial (pcca-1) from Caenorhabditis briggsae.